We begin with the raw amino-acid sequence, 991 residues long: Polyribonucleotide nucleotidyltransferase 2, mitochondrial (991 aa).

A mitochondrion-targeting transit peptide spans 1–39; sequence MSSIVNRASSASLPNFLAWRALGFRTICSGRLGFAPSVP. Positions 609-667 constitute a KH domain; it reads PRLATLKYSNDSLRTLIGPMGVLKRKIEVETGARLSIDNGTLTIVAKNQDVMEKAQEQV. The 69-residue stretch at 678–746 folds into the S1 motif 1 domain; sequence GGVYKGTVSS…VRGNIKLSRK (69 aa). The tract at residues 813–865 is disordered; that stretch reads EAEKSSPVNDNDKPRRAATSKPDRKPKSTASKLIATQKEEEALESIAPEETSA. Residues 822–838 show a composition bias toward basic and acidic residues; it reads DNDKPRRAATSKPDRKP. The region spanning 925 to 987 is the S1 motif 2 domain; that stretch reads GTEMTATVDH…GVPVMALVDE (63 aa).

Belongs to the polyribonucleotide nucleotidyltransferase family.

The protein localises to the mitochondrion. The enzyme catalyses RNA(n+1) + phosphate = RNA(n) + a ribonucleoside 5'-diphosphate. Involved in the 3'-end maturation of mitochondrial mRNAs, rRNAs and tRNAs. Functions as a poly(A) mRNA 3'-5' degrading phosphorylase and is required for the degradation of highly expressed transcripts of non-coding regions. This Arabidopsis thaliana (Mouse-ear cress) protein is Polyribonucleotide nucleotidyltransferase 2, mitochondrial (PNP2).